The chain runs to 270 residues: uncharacterized protein (270 aa).

D53, H55, D83, N116, H207, and H209 together coordinate a divalent metal cation.

Belongs to the metallophosphoesterase superfamily. Requires a divalent metal cation as cofactor.

This is an uncharacterized protein from Bacillus subtilis (strain 168).